We begin with the raw amino-acid sequence, 216 residues long: Ribose-5-phosphate isomerase A (216 aa).

Residues Thr-26–Thr-29, Asp-79–Asp-82, and Lys-92–Gly-95 contribute to the substrate site. Glu-101 (proton acceptor) is an active-site residue. Lys-119 contributes to the substrate binding site.

Belongs to the ribose 5-phosphate isomerase family. In terms of assembly, homodimer.

The enzyme catalyses aldehydo-D-ribose 5-phosphate = D-ribulose 5-phosphate. It functions in the pathway carbohydrate degradation; pentose phosphate pathway; D-ribose 5-phosphate from D-ribulose 5-phosphate (non-oxidative stage): step 1/1. Its function is as follows. Catalyzes the reversible conversion of ribose-5-phosphate to ribulose 5-phosphate. The protein is Ribose-5-phosphate isomerase A of Legionella pneumophila subsp. pneumophila (strain Philadelphia 1 / ATCC 33152 / DSM 7513).